Consider the following 303-residue polypeptide: Sulfotransferase 6B1 (303 aa).

3'-phosphoadenylyl sulfate is bound at residue 65 to 70; sequence KCGSNW. H118 functions as the Proton acceptor in the catalytic mechanism. Residues R140, S148, Y203, 237–242, and 259–261 contribute to the 3'-phosphoadenylyl sulfate site; these read STFLAM and RKG.

This sequence belongs to the sulfotransferase 1 family. In terms of tissue distribution, expressed in brain, heart, kidney, thymus, lung, liver and testis.

The protein resides in the cytoplasm. Its subcellular location is the cytosol. The catalysed reaction is thyroxine + 3'-phosphoadenylyl sulfate = thyroxine sulfate + adenosine 3',5'-bisphosphate + H(+). Sulfotransferase that utilizes 3'-phospho-5'-adenylyl sulfate (PAPS) as sulfonate donor to catalyze the sulfate conjugation of thyroxine. Involved in the metabolism of thyroxine. This is Sulfotransferase 6B1 (Sult6b1) from Mus musculus (Mouse).